The primary structure comprises 491 residues: Cytochrome P450 2F2 (491 aa).

Residue Cys436 coordinates heme.

It belongs to the cytochrome P450 family. It depends on heme as a cofactor.

It is found in the endoplasmic reticulum membrane. The protein resides in the microsome membrane. Involved in the regio- and stereoselective transformation of naphthalene to trans-1R-hydroxy-2R-glutathionyl-1,2-dihydronaphthalene in the presence of glutathione and glutathione S-transferases. It specifically catalyzes the production of a very reactive and potentially toxic intermediate, the 2R,2S arene oxide, that is associated with necrosis of the unciliated bronchiolar epithelial cells or club cells in lung. In Rattus norvegicus (Rat), this protein is Cytochrome P450 2F2 (Cyp2f2).